We begin with the raw amino-acid sequence, 144 residues long: Probable transcription termination protein NusA (144 aa).

The KH domain maps to 101-144 (RTDIVVGVKPEEIGKVIGKEGKNIKLFKDAVSRYFNVNSISVKQ).

This sequence belongs to the NusA family.

The protein localises to the cytoplasm. Participates in transcription termination. The chain is Probable transcription termination protein NusA from Thermoplasma acidophilum (strain ATCC 25905 / DSM 1728 / JCM 9062 / NBRC 15155 / AMRC-C165).